We begin with the raw amino-acid sequence, 105 residues long: Large ribosomal subunit protein uL24 (105 aa).

This sequence belongs to the universal ribosomal protein uL24 family. As to quaternary structure, part of the 50S ribosomal subunit.

Functionally, one of two assembly initiator proteins, it binds directly to the 5'-end of the 23S rRNA, where it nucleates assembly of the 50S subunit. In terms of biological role, one of the proteins that surrounds the polypeptide exit tunnel on the outside of the subunit. The protein is Large ribosomal subunit protein uL24 of Aliivibrio salmonicida (strain LFI1238) (Vibrio salmonicida (strain LFI1238)).